We begin with the raw amino-acid sequence, 37 residues long: Cytochrome b6-f complex subunit 5 (37 aa).

Residues Leu5–Ala25 form a helical membrane-spanning segment.

The protein belongs to the PetG family. In terms of assembly, the 4 large subunits of the cytochrome b6-f complex are cytochrome b6, subunit IV (17 kDa polypeptide, PetD), cytochrome f and the Rieske protein, while the 4 small subunits are PetG, PetL, PetM and PetN. The complex functions as a dimer.

The protein resides in the cellular thylakoid membrane. Its function is as follows. Component of the cytochrome b6-f complex, which mediates electron transfer between photosystem II (PSII) and photosystem I (PSI), cyclic electron flow around PSI, and state transitions. PetG is required for either the stability or assembly of the cytochrome b6-f complex. This chain is Cytochrome b6-f complex subunit 5, found in Anabaena variabilis.